A 500-amino-acid chain; its full sequence is NAD(P)H-quinone oxidoreductase chain 4, chloroplastic (500 aa).

A run of 14 helical transmembrane segments spans residues 4-24, 37-57, 87-107, 113-130, 134-154, 167-187, 211-231, 242-262, 272-292, 313-333, 334-354, 386-406, 417-437, and 462-482; these read FPWLTILVVLPIFAGSLIFFL, ISICLLEFLLMTYAFCYHFQL, VGSILLTGFITTLATLAAWPV, LFYFLMLAMYSGQIGLFS, LLLFFIMWELELIPVYLLLSM, FILYTAGGSIFFLIGVLGMGL, ILLYFGFLIAYAVKLPIIPLH, HYSTCMLLAGILLKMGAYGLI, AHYLFSPWLVIIGAIQIIYAA, MGFIIIGIGSITNIGLNGAIL, QILSHGFIGATLFFLAGTASD, LALPGMSGFVAELVVFFGLIT, LITFVMAIGMILTPIYLLSML, and LFILICIFLPVIGIGIYPDLV.

Belongs to the complex I subunit 4 family.

The protein localises to the plastid. It is found in the chloroplast thylakoid membrane. It carries out the reaction a plastoquinone + NADH + (n+1) H(+)(in) = a plastoquinol + NAD(+) + n H(+)(out). It catalyses the reaction a plastoquinone + NADPH + (n+1) H(+)(in) = a plastoquinol + NADP(+) + n H(+)(out). The chain is NAD(P)H-quinone oxidoreductase chain 4, chloroplastic from Agrostis stolonifera (Creeping bentgrass).